We begin with the raw amino-acid sequence, 317 residues long: 4-hydroxy-3-methylbut-2-enyl diphosphate reductase (317 aa).

C12 serves as a coordination point for [4Fe-4S] cluster. 2 residues coordinate (2E)-4-hydroxy-3-methylbut-2-enyl diphosphate: H41 and H74. Dimethylallyl diphosphate-binding residues include H41 and H74. 2 residues coordinate isopentenyl diphosphate: H41 and H74. Residue C97 coordinates [4Fe-4S] cluster. (2E)-4-hydroxy-3-methylbut-2-enyl diphosphate is bound at residue H125. H125 is a dimethylallyl diphosphate binding site. H125 contributes to the isopentenyl diphosphate binding site. E127 functions as the Proton donor in the catalytic mechanism. Position 168 (T168) interacts with (2E)-4-hydroxy-3-methylbut-2-enyl diphosphate. C198 provides a ligand contact to [4Fe-4S] cluster. Positions 226, 227, 228, and 270 each coordinate (2E)-4-hydroxy-3-methylbut-2-enyl diphosphate. Dimethylallyl diphosphate-binding residues include S226, S227, N228, and S270. Residues S226, S227, N228, and S270 each contribute to the isopentenyl diphosphate site.

The protein belongs to the IspH family. Homodimer. Requires [4Fe-4S] cluster as cofactor.

The enzyme catalyses isopentenyl diphosphate + 2 oxidized [2Fe-2S]-[ferredoxin] + H2O = (2E)-4-hydroxy-3-methylbut-2-enyl diphosphate + 2 reduced [2Fe-2S]-[ferredoxin] + 2 H(+). It carries out the reaction dimethylallyl diphosphate + 2 oxidized [2Fe-2S]-[ferredoxin] + H2O = (2E)-4-hydroxy-3-methylbut-2-enyl diphosphate + 2 reduced [2Fe-2S]-[ferredoxin] + 2 H(+). The protein operates within isoprenoid biosynthesis; dimethylallyl diphosphate biosynthesis; dimethylallyl diphosphate from (2E)-4-hydroxy-3-methylbutenyl diphosphate: step 1/1. It functions in the pathway isoprenoid biosynthesis; isopentenyl diphosphate biosynthesis via DXP pathway; isopentenyl diphosphate from 1-deoxy-D-xylulose 5-phosphate: step 6/6. Catalyzes the conversion of 1-hydroxy-2-methyl-2-(E)-butenyl 4-diphosphate (HMBPP) into a mixture of isopentenyl diphosphate (IPP) and dimethylallyl diphosphate (DMAPP). Acts in the terminal step of the DOXP/MEP pathway for isoprenoid precursor biosynthesis. This Edwardsiella ictaluri (strain 93-146) protein is 4-hydroxy-3-methylbut-2-enyl diphosphate reductase.